The chain runs to 69 residues: MSDIETLKAEIKKLSAKSVNAKMNLHDLSEDLPTNWQSILEVAQETYNTFKTLEDARKKLKELEAGAAA.

The protein belongs to the UPF0437 family.

In Azorhizobium caulinodans (strain ATCC 43989 / DSM 5975 / JCM 20966 / LMG 6465 / NBRC 14845 / NCIMB 13405 / ORS 571), this protein is UPF0437 protein AZC_3451.